The following is a 384-amino-acid chain: Bifunctional enzyme IspD/IspF (384 aa).

2 2-C-methyl-D-erythritol 4-phosphate cytidylyltransferase regions span residues 1–227 and 1–228; these read MAKV…EGEQ and MAKV…GEQR. The segment at 228-384 is 2-C-methyl-D-erythritol 2,4-cyclodiphosphate synthase; it reads RIGSGFDVHR…QATALITLPF (157 aa). D234 and H236 together coordinate a divalent metal cation. 4-CDP-2-C-methyl-D-erythritol 2-phosphate-binding positions include 234-236 and 260-261; these read DVH and HS. Residue H268 participates in a divalent metal cation binding. 4-CDP-2-C-methyl-D-erythritol 2-phosphate contacts are provided by residues 282–284, 358–361, F365, and R368; these read DIG and TTTE.

The protein in the N-terminal section; belongs to the IspD/TarI cytidylyltransferase family. IspD subfamily. It in the C-terminal section; belongs to the IspF family. It depends on a divalent metal cation as a cofactor.

It carries out the reaction 2-C-methyl-D-erythritol 4-phosphate + CTP + H(+) = 4-CDP-2-C-methyl-D-erythritol + diphosphate. The enzyme catalyses 4-CDP-2-C-methyl-D-erythritol 2-phosphate = 2-C-methyl-D-erythritol 2,4-cyclic diphosphate + CMP. It functions in the pathway isoprenoid biosynthesis; isopentenyl diphosphate biosynthesis via DXP pathway; isopentenyl diphosphate from 1-deoxy-D-xylulose 5-phosphate: step 2/6. Its pathway is isoprenoid biosynthesis; isopentenyl diphosphate biosynthesis via DXP pathway; isopentenyl diphosphate from 1-deoxy-D-xylulose 5-phosphate: step 4/6. In terms of biological role, bifunctional enzyme that catalyzes the formation of 4-diphosphocytidyl-2-C-methyl-D-erythritol from CTP and 2-C-methyl-D-erythritol 4-phosphate (MEP) (IspD), and catalyzes the conversion of 4-diphosphocytidyl-2-C-methyl-D-erythritol 2-phosphate (CDP-ME2P) to 2-C-methyl-D-erythritol 2,4-cyclodiphosphate (ME-CPP) with a corresponding release of cytidine 5-monophosphate (CMP) (IspF). The protein is Bifunctional enzyme IspD/IspF of Rhodospirillum rubrum (strain ATCC 11170 / ATH 1.1.1 / DSM 467 / LMG 4362 / NCIMB 8255 / S1).